We begin with the raw amino-acid sequence, 446 residues long: Phosphoglucosamine mutase (446 aa).

Ser102 functions as the Phosphoserine intermediate in the catalytic mechanism. Residues Ser102, Asp241, Asp243, and Asp245 each coordinate Mg(2+). Ser102 carries the phosphoserine modification.

This sequence belongs to the phosphohexose mutase family. Mg(2+) serves as cofactor. Post-translationally, activated by phosphorylation.

It carries out the reaction alpha-D-glucosamine 1-phosphate = D-glucosamine 6-phosphate. Its function is as follows. Catalyzes the conversion of glucosamine-6-phosphate to glucosamine-1-phosphate. In Yersinia pseudotuberculosis serotype O:1b (strain IP 31758), this protein is Phosphoglucosamine mutase.